Here is a 555-residue protein sequence, read N- to C-terminus: Glutamine--tRNA ligase (555 aa).

The short motif at 34 to 44 (PEPNGYLHIGH) is the 'HIGH' region element. Residues 35–37 (EPN) and 41–47 (HIGHAKS) contribute to the ATP site. Residues D67 and Y212 each contribute to the L-glutamine site. Residues T231, 261–262 (RL), and 269–271 (MSK) each bind ATP. Residues 268–272 (VMSKR) carry the 'KMSKS' region motif.

Belongs to the class-I aminoacyl-tRNA synthetase family. In terms of assembly, monomer.

The protein resides in the cytoplasm. It carries out the reaction tRNA(Gln) + L-glutamine + ATP = L-glutaminyl-tRNA(Gln) + AMP + diphosphate. This is Glutamine--tRNA ligase from Proteus mirabilis (strain HI4320).